Reading from the N-terminus, the 439-residue chain is AP-2 complex subunit mu (439 aa).

The MHD domain occupies 172-438 (RNELYIDVVE…LTKAGTYQNR (267 aa)).

It belongs to the adaptor complexes medium subunit family. As to quaternary structure, adaptor protein complex 2 (AP-2) is a heterotetramer composed of two large adaptins (alpha-type and beta-type subunits), a medium adaptin (mu-type subunit AP50) and a small adaptin (sigma-type subunit AP17). Phosphorylated.

Its subcellular location is the cell membrane. It is found in the membrane. It localises to the coated pit. Component of the adaptor complexes which link clathrin to receptors in coated vesicles. Clathrin-associated protein complexes are believed to interact with the cytoplasmic tails of membrane proteins, leading to their selection and concentration. AP50 is a subunit of the plasma membrane adaptor. The sequence is that of AP-2 complex subunit mu (apm2) from Dictyostelium discoideum (Social amoeba).